Here is a 246-residue protein sequence, read N- to C-terminus: Salivary antigen SP32 (246 aa).

The signal sequence occupies residues 1-23 (MSGHILTVGLIVVVAHCATLSSS). Residues 51 to 160 (DKFYPDISDD…PDLSKYKNSP (110 aa)) form a disordered region. Over residues 65 to 78 (VVRDNGRKGGDRGR) the composition is skewed to basic and acidic residues. Polar residues predominate over residues 79–124 (QSTPSGKESHPSATQTGGRRPSQSPCGESRPSGSATSGRRPSQSPR). The segment covering 141-155 (QQDRRQNKKQPDLSK) has biased composition (basic and acidic residues).

In terms of assembly, interacts with human DSG1. Interacts with human DSG3. Salivary gland (at protein level).

Its subcellular location is the secreted. Its function is as follows. Down-regulates the expression of CD86 and HLA-DR on the surface of lipopolysaccharide (LPS)-stimulated human peripheral blood mononuclear cells (PBMCs). Reduces LPS-induced secretion of IL-1beta/IL1B in human PBMCs. Reduces LPS-induced secretion of various cytokines, such as IL-1beta, TNF-alpha/TNF, MCP-1/CCL2, IL6, IL27 and IL-1alpha/IL1A, in host cultured macrophages probably via inhibition of NF-kappa-B signaling pathway. Reduces production of IFN-gamma/IFNG, IL4 and IL6 in human lymphocytes activated with PMA/ionomycin. Exhibits anti-inflammatory activity in carrageenan-induced paw edema model in rats. This is Salivary antigen SP32 from Phlebotomus papatasi (Sandfly).